Here is a 46-residue protein sequence, read N- to C-terminus: Major urinary protein (46 aa).

Asparagine 15 carries an N-linked (GlcNAc...) asparagine glycan.

The protein belongs to the calycin superfamily. Lipocalin family. As to expression, found in many tissues including liver, urine, preputial gland, clitoral gland, submandibular gland and salivary gland.

It is found in the secreted. Functionally, binds pheromones that are released from drying urine of males. These pheromones affect the sexual behavior of females. Acts as a shuttle for pheromonal communication between individuals of the same species. In Rattus rattus (Black rat), this protein is Major urinary protein.